Reading from the N-terminus, the 84-residue chain is Delta-thalatoxin-Hhe1a (84 aa).

The signal sequence occupies residues 1–19 (MAYQKIVFVALMLVLAVSA). Positions 20–33 (MRLPDQQDQDISVA) are excised as a propeptide. 3 disulfide bridges follow: Cys-38/Cys-78, Cys-40/Cys-68, and Cys-61/Cys-79.

It belongs to the sea anemone sodium channel inhibitory toxin family. Type II subfamily.

It localises to the secreted. The protein resides in the nematocyst. Functionally, binds specifically to the voltage-gated sodium channel (Nav) and delays its inactivation. This Heterodactyla hemprichii (Hemprich's sea anemone) protein is Delta-thalatoxin-Hhe1a.